The primary structure comprises 1295 residues: Phosphoribosylformylglycinamidine synthase (1295 aa).

The disordered stretch occupies residues Trp-305–Lys-327. ATP contacts are provided by residues Gly-307 to Asp-318, Thr-386 to Tyr-388, and Ala-678. Residues Asp-679, Glu-718, Asn-722, and Asp-884 each contribute to the Mg(2+) site. Position 886 (Ser-886) interacts with ATP. The 254-residue stretch at Val-1042–Gly-1295 folds into the Glutamine amidotransferase type-1 domain. Catalysis depends on Cys-1135, which acts as the Nucleophile. Active-site residues include His-1260 and Glu-1262.

In the N-terminal section; belongs to the FGAMS family. As to quaternary structure, monomer.

It localises to the cytoplasm. It carries out the reaction N(2)-formyl-N(1)-(5-phospho-beta-D-ribosyl)glycinamide + L-glutamine + ATP + H2O = 2-formamido-N(1)-(5-O-phospho-beta-D-ribosyl)acetamidine + L-glutamate + ADP + phosphate + H(+). It participates in purine metabolism; IMP biosynthesis via de novo pathway; 5-amino-1-(5-phospho-D-ribosyl)imidazole from N(2)-formyl-N(1)-(5-phospho-D-ribosyl)glycinamide: step 1/2. Functionally, phosphoribosylformylglycinamidine synthase involved in the purines biosynthetic pathway. Catalyzes the ATP-dependent conversion of formylglycinamide ribonucleotide (FGAR) and glutamine to yield formylglycinamidine ribonucleotide (FGAM) and glutamate. This chain is Phosphoribosylformylglycinamidine synthase, found in Salmonella typhimurium (strain LT2 / SGSC1412 / ATCC 700720).